The chain runs to 309 residues: Ribonuclease Z (309 aa).

Positions 63, 65, 67, 68, 145, 216, and 274 each coordinate Zn(2+). The active-site Proton acceptor is Asp-67.

Belongs to the RNase Z family. In terms of assembly, homodimer. Zn(2+) is required as a cofactor.

It carries out the reaction Endonucleolytic cleavage of RNA, removing extra 3' nucleotides from tRNA precursor, generating 3' termini of tRNAs. A 3'-hydroxy group is left at the tRNA terminus and a 5'-phosphoryl group is left at the trailer molecule.. Zinc phosphodiesterase, which displays some tRNA 3'-processing endonuclease activity. Probably involved in tRNA maturation, by removing a 3'-trailer from precursor tRNA. In Streptococcus pneumoniae (strain 70585), this protein is Ribonuclease Z.